Consider the following 449-residue polypeptide: MKDLTAEAAISPSDDNLLPALASLREGHPDKGILKLLAQLKIDHPEWAVSEKRFRKALQLAPCPGGGEADPKEKALVADTGLDPSIDVKSIAPKVEVKMFAGGKGKGLVAKEELKQGEMLWQEEPWIVTSDPGHYSLLTQSMMCSQCFSLFARPSPPISVPCPHCTTAHFCNRLCYTKSLSSSHPPLLCPGLNPDASSLMNFIRKRGERSVEGVAKILARWRGEREWDAKGKAEEMEKRIWKGMARVSQKRKEMERREWSYISKARMEEWHLIHIMLTNVLNPSPTHENYKPFQRLLISQHPRRSKPVPLTEKEVKRWFSFESFLELLGLVGLNQEDSGGLYALHAHMNHSCEPNIQVRNLPKSYTPPTQDTLPVNLPPPIQAGDRVSNKLTILARHEIQPGEELTISYVNMKMSRDERRQALREGYGFWCACDRCMREKEQPNGEKAE.

The region spanning 93–410 is the SET domain; sequence PKVEVKMFAG…PGEELTISYV (318 aa).

This sequence belongs to the class V-like SAM-binding methyltransferase superfamily. Histone-lysine methyltransferase family. SET5 subfamily.

It is found in the nucleus. The protein localises to the chromosome. It localises to the cytoplasm. It carries out the reaction L-lysyl-[histone] + S-adenosyl-L-methionine = N(6)-methyl-L-lysyl-[histone] + S-adenosyl-L-homocysteine + H(+). Functionally, histone methyltransferase that monomethylates 'Lys-5', 'Lys-8' and 'Lys-12' of histone H4 (H4K5me1, H4K8me1 and H4K12me1, respectively), thereby controlling gene expression and remodeling chromatin structures. The polypeptide is Histone-lysine N-methyltransferase SET5 (SET5) (Cryptococcus neoformans var. neoformans serotype D (strain B-3501A) (Filobasidiella neoformans)).